We begin with the raw amino-acid sequence, 316 residues long: Ribosomal RNA small subunit methyltransferase H (316 aa).

S-adenosyl-L-methionine contacts are provided by residues 35 to 37 (GGH), aspartate 55, tyrosine 79, aspartate 100, and glutamine 107.

Belongs to the methyltransferase superfamily. RsmH family.

The protein resides in the cytoplasm. It carries out the reaction cytidine(1402) in 16S rRNA + S-adenosyl-L-methionine = N(4)-methylcytidine(1402) in 16S rRNA + S-adenosyl-L-homocysteine + H(+). Its function is as follows. Specifically methylates the N4 position of cytidine in position 1402 (C1402) of 16S rRNA. This chain is Ribosomal RNA small subunit methyltransferase H, found in Nitrosospira multiformis (strain ATCC 25196 / NCIMB 11849 / C 71).